The primary structure comprises 914 residues: Dynamin-2A (914 aa).

An N-acetylmethionine modification is found at Met1. In terms of domain architecture, Dynamin-type G spans 35-303 (PATFLNVVAL…IRSRMKLRLP (269 aa)). The tract at residues 45-52 (GNVGAGKS) is G1 motif. 45–52 (GNVGAGKS) is a binding site for GTP. A G2 motif region spans residues 71 to 73 (ATR). A G3 motif region spans residues 143-146 (DLPG). Residues 143–147 (DLPGL) and 204–207 (GKID) contribute to the GTP site. The interval 204 to 207 (GKID) is G4 motif. A G5 motif region spans residues 238–241 (AVIG). Basic and acidic residues predominate over residues 507–522 (RREEELKGRSSKKGQD). Disordered stretches follow at residues 507 to 570 (RREE…TAGP) and 629 to 648 (PEDE…NGPD). Polar residues predominate over residues 523 to 535 (AEQSLLSRATSPQ). Basic and acidic residues-rich tracts occupy residues 547 to 560 (SMKD…KETP) and 634 to 645 (EKSKSSKDKKAN). Residues 572–696 (GEITAGYLMK…WINKLQKVIQ (125 aa)) form the PH domain. The region spanning 730 to 823 (LRWMSQEVRG…QLSIHDNRAA (94 aa)) is the GED domain. The stretch at 781–805 (NERIESLIQEDQNVKRRRERYQKQS) forms a coiled coil. The segment at 821-914 (RAAAASSYSD…PPPTGSAYRY (94 aa)) is disordered. 2 stretches are compositionally biased toward polar residues: residues 826-839 (SSYS…SSPR) and 852-866 (AFNS…SLSK).

This sequence belongs to the TRAFAC class dynamin-like GTPase superfamily. Dynamin/Fzo/YdjA family. Binds PtdIns3P. Interacts with SH3P3 (via SH3 domain) and (via C-terminus) with GAMMA-ADR. May homooligomerize or heterooligomerize.

The protein resides in the cytoplasm. The protein localises to the cytosol. It localises to the golgi apparatus membrane. It is found in the cytoskeleton. Its subcellular location is the phragmoplast. The protein resides in the cytoplasmic vesicle. The protein localises to the clathrin-coated vesicle. The enzyme catalyses GTP + H2O = GDP + phosphate + H(+). With respect to regulation, increased GTPase activity in the presence of phosphatidic acid. In terms of biological role, microtubule-associated force-producing protein involved in clathrin-mediated vesicle trafficking from the trans-Golgi network to the central vacuole. Able to bind and hydrolyze GTP. Binds specifically to phosphatidylinositol 3-phosphate (PtdIns3P). The sequence is that of Dynamin-2A (DRP2A) from Arabidopsis thaliana (Mouse-ear cress).